A 147-amino-acid chain; its full sequence is 6,7-dimethyl-8-ribityllumazine synthase (147 aa).

Residues Phe-16, 48 to 50 (TFD), and 73 to 75 (AVI) each bind 5-amino-6-(D-ribitylamino)uracil. Position 78–79 (78–79 (DT)) interacts with (2S)-2-hydroxy-3-oxobutyl phosphate. His-81 (proton donor) is an active-site residue. Leu-106 provides a ligand contact to 5-amino-6-(D-ribitylamino)uracil. Arg-121 provides a ligand contact to (2S)-2-hydroxy-3-oxobutyl phosphate.

The protein belongs to the DMRL synthase family.

It catalyses the reaction (2S)-2-hydroxy-3-oxobutyl phosphate + 5-amino-6-(D-ribitylamino)uracil = 6,7-dimethyl-8-(1-D-ribityl)lumazine + phosphate + 2 H2O + H(+). It functions in the pathway cofactor biosynthesis; riboflavin biosynthesis; riboflavin from 2-hydroxy-3-oxobutyl phosphate and 5-amino-6-(D-ribitylamino)uracil: step 1/2. In terms of biological role, catalyzes the formation of 6,7-dimethyl-8-ribityllumazine by condensation of 5-amino-6-(D-ribitylamino)uracil with 3,4-dihydroxy-2-butanone 4-phosphate. This is the penultimate step in the biosynthesis of riboflavin. The sequence is that of 6,7-dimethyl-8-ribityllumazine synthase from Aeropyrum pernix (strain ATCC 700893 / DSM 11879 / JCM 9820 / NBRC 100138 / K1).